Here is a 212-residue protein sequence, read N- to C-terminus: Adenylate kinase (212 aa).

An ATP-binding site is contributed by 10–15; the sequence is GAGKGT. The tract at residues 30–59 is NMP; it reads AIGDIFRAIIKTSSKDAEVINSYVEQGKLI. Residues R36, 57–59, 85–88, and Q92 each bind AMP; these read KLI and GYPR. The interval 122–160 is LID; the sequence is GRYSCKSCGKIYNDYFLKPRIDKICDVCKSSVFEYRKDD. R123 is an ATP binding site. C126 and C129 together coordinate Zn(2+). 132 to 133 lines the ATP pocket; that stretch reads IY. Zn(2+) is bound by residues C146 and C149. Residues R157 and R168 each coordinate AMP. K196 provides a ligand contact to ATP.

It belongs to the adenylate kinase family. As to quaternary structure, monomer.

The protein localises to the cytoplasm. It carries out the reaction AMP + ATP = 2 ADP. It participates in purine metabolism; AMP biosynthesis via salvage pathway; AMP from ADP: step 1/1. Functionally, catalyzes the reversible transfer of the terminal phosphate group between ATP and AMP. Plays an important role in cellular energy homeostasis and in adenine nucleotide metabolism. The sequence is that of Adenylate kinase from Rickettsia bellii (strain RML369-C).